The chain runs to 57 residues: Cytochrome b-c1 complex subunit 10, mitochondrial (57 aa).

Residues 1 to 23 (MAGTSGLLNAVKPKIQTIDIQAA) lie on the Mitochondrial matrix side of the membrane. Residues 24–44 (AGWGIAAAAGAIWVVQPFGWI) form a helical membrane-spanning segment. The Mitochondrial intermembrane portion of the chain corresponds to 45–57 (KKTFIDPPPTEEK).

Belongs to the UQCR11/QCR10 family. As to quaternary structure, component of the ubiquinol-cytochrome c oxidoreductase (cytochrome b-c1 complex, complex III, CIII), a multisubunit enzyme composed of 10 subunits. The complex is composed of 3 respiratory subunits cytochrome b (MT-CYB), cytochrome c1 (CYC1-1 or CYC1-2) and Rieske protein (UCR1-1 or UCR1-2), 2 core protein subunits MPPalpha1 (or MPPalpha2) and MPPB, and 5 low-molecular weight protein subunits QCR7-1 (or QCR7-2), UCRQ-1 (or UCRQ-2), QCR9, UCRY and probably QCR6-1 (or QCR6-2). The complex exists as an obligatory dimer and forms supercomplexes (SCs) in the inner mitochondrial membrane with NADH-ubiquinone oxidoreductase (complex I, CI), resulting in different assemblies (supercomplexes SCI(1)III(2) and SCI(2)III(4)).

It is found in the mitochondrion inner membrane. Component of the ubiquinol-cytochrome c oxidoreductase, a multisubunit transmembrane complex that is part of the mitochondrial electron transport chain which drives oxidative phosphorylation. The respiratory chain contains 3 multisubunit complexes succinate dehydrogenase (complex II, CII), ubiquinol-cytochrome c oxidoreductase (cytochrome b-c1 complex, complex III, CIII) and cytochrome c oxidase (complex IV, CIV), that cooperate to transfer electrons derived from NADH and succinate to molecular oxygen, creating an electrochemical gradient over the inner membrane that drives transmembrane transport and the ATP synthase. The cytochrome b-c1 complex catalyzes electron transfer from ubiquinol to cytochrome c, linking this redox reaction to translocation of protons across the mitochondrial inner membrane, with protons being carried across the membrane as hydrogens on the quinol. In the process called Q cycle, 2 protons are consumed from the matrix, 4 protons are released into the intermembrane space and 2 electrons are passed to cytochrome c. The polypeptide is Cytochrome b-c1 complex subunit 10, mitochondrial (UCRY) (Arabidopsis thaliana (Mouse-ear cress)).